A 219-amino-acid chain; its full sequence is Elongation factor Ts (219 aa).

The involved in Mg(2+) ion dislocation from EF-Tu stretch occupies residues Thr-82 to Val-85.

The protein belongs to the EF-Ts family.

Its subcellular location is the cytoplasm. Functionally, associates with the EF-Tu.GDP complex and induces the exchange of GDP to GTP. It remains bound to the aminoacyl-tRNA.EF-Tu.GTP complex up to the GTP hydrolysis stage on the ribosome. The sequence is that of Elongation factor Ts from Trichodesmium erythraeum (strain IMS101).